A 428-amino-acid polypeptide reads, in one-letter code: Somatostatin receptor type 3 (428 aa).

Residues 1–12 (MATVTYPSSEPT) are compositionally biased toward polar residues. The tract at residues 1–20 (MATVTYPSSEPTTLDPGNAS) is disordered. Residues 1 to 45 (MATVTYPSSEPTTLDPGNASSTWPLDTTLGNTSAGASLTGLAVSG) are Extracellular-facing. N18 and N31 each carry an N-linked (GlcNAc...) asparagine glycan. Residues 46 to 71 (ILISLVYLVVCVVGLLGNSLVIYVVL) traverse the membrane as a helical segment. At 72–81 (RHTSSPSVTS) the chain is on the cytoplasmic side. Residues 82–103 (VYILNLALADELFMLGLPFLAA) form a helical membrane-spanning segment. Topologically, residues 104 to 118 (QNALSYWPFGSLMCR) are extracellular. C117 and C192 are oxidised to a cystine. The helical transmembrane segment at 119–140 (LVMAVDGINQFTSIFCLTVMSV) threads the bilayer. At 141-162 (DRYLAVVHPTRSARWRTAPVAR) the chain is on the cytoplasmic side. A helical transmembrane segment spans residues 163 to 182 (TVSAAVWVASAVVVLPVVVF). At 183–206 (SGVPRGMSTCHMQWPEPAAAWRTA) the chain is on the extracellular side. A helical transmembrane segment spans residues 207-232 (FIIYTAALGFFGPLLVICLCYLLIVV). The Cytoplasmic portion of the chain corresponds to 233 to 266 (KVRSTTRRVRAPSCQWVQAPACQRRRRSERRVTR). The helical transmembrane segment at 267–288 (MVVAVVALFVLCWMPFYLLNIV) threads the bilayer. Over 289-302 (NVVCPLPEEPAFFG) the chain is Extracellular. A helical transmembrane segment spans residues 303–325 (LYFLVVALPYANSCANPILYGFL). Over 326 to 428 (SYRFKQGFRR…GDKASTLSHL (103 aa)) the chain is Cytoplasmic. Residues S341, S346, and S351 each carry the phosphoserine modification. Residues 344-428 (IRSQEPGSGP…GDKASTLSHL (85 aa)) form a disordered region. T357 bears the Phosphothreonine mark. Positions 357 to 370 (TEEEEDEEEEERRE) are enriched in acidic residues. Positions 385-412 (RLSQIAQAGTSGQQPRPCTGTAKEQQLL) are enriched in polar residues.

The protein belongs to the G-protein coupled receptor 1 family. As to quaternary structure, homodimer and heterodimer with SSTR2. Heterodimerization with SSTR2 inactivates SSTR3 receptor function. Post-translationally, phosphorylated. Phosphorylation increases upon somatostatin binding. In the brain, primarily observed in the forebrain. Moderate levels found throughout laminae 2-6 of the neocortex and allocortex, and high levels in lamina 2 of the piriform and entorhinal cortices. High levels also present in the cornu ammonis fields of the hippocampus. In the amygdala, highly expressed in the nucleus of the lateral olfactory tract with expression also detected in the rostral portions of the basal magnocellular and lateral nuclei. In the diencephalon, moderate levels observed in the ventromedial and arcuate nuclei of the hypothalamus. In the midbrain, moderate levels found in the lateral portion of the substantia nigra pars reticulata.

It localises to the cell membrane. Receptor for somatostatin-14 and -28. This receptor is coupled via pertussis toxin sensitive G proteins to inhibition of adenylyl cyclase. The sequence is that of Somatostatin receptor type 3 (Sstr3) from Mus musculus (Mouse).